We begin with the raw amino-acid sequence, 359 residues long: Small ribosomal subunit biogenesis GTPase RsgA (359 aa).

Positions 101 to 259 constitute a CP-type G domain; sequence KRKGSQAIAS…LMDNPGIREV (159 aa). GTP-binding positions include 149-152 and 201-209; these read NKKD and GSSGAGKST. Zn(2+) contacts are provided by Cys-284, Cys-289, His-291, and Cys-297. The segment at 331–359 is disordered; it reads DPEEARKKKQKDKQMSKALQKRLKDKGRK. The span at 349-359 shows a compositional bias: basic residues; it reads LQKRLKDKGRK.

This sequence belongs to the TRAFAC class YlqF/YawG GTPase family. RsgA subfamily. Monomer. Associates with 30S ribosomal subunit, binds 16S rRNA. Zn(2+) serves as cofactor.

It localises to the cytoplasm. One of several proteins that assist in the late maturation steps of the functional core of the 30S ribosomal subunit. Helps release RbfA from mature subunits. May play a role in the assembly of ribosomal proteins into the subunit. Circularly permuted GTPase that catalyzes slow GTP hydrolysis, GTPase activity is stimulated by the 30S ribosomal subunit. The polypeptide is Small ribosomal subunit biogenesis GTPase RsgA (Leptospira interrogans serogroup Icterohaemorrhagiae serovar Lai (strain 56601)).